A 265-amino-acid polypeptide reads, in one-letter code: Undecaprenyl-diphosphatase (265 aa).

Helical transmembrane passes span 1–21 (MDFIHILALAILQGLTEFLPI), 39–61 (QGLAFDVAVHLGTLVAVISYFRL), 85–105 (LAWAVLLGTLPVGLVGIMLTE), 115–135 (LIIAWSTVGFGFLLAYADWAG), 149–169 (ILFIGLAQALALIPGTSRSGI), 187–207 (FSFLLAIPVILLAGGLAALDL), 218–238 (ALALGALISGLCAYACIHYFF), and 244–264 (IGMLPFAVYRLLLGALLFYLF).

Belongs to the UppP family.

The protein localises to the cell inner membrane. The enzyme catalyses di-trans,octa-cis-undecaprenyl diphosphate + H2O = di-trans,octa-cis-undecaprenyl phosphate + phosphate + H(+). Functionally, catalyzes the dephosphorylation of undecaprenyl diphosphate (UPP). Confers resistance to bacitracin. This is Undecaprenyl-diphosphatase from Nitrosococcus oceani (strain ATCC 19707 / BCRC 17464 / JCM 30415 / NCIMB 11848 / C-107).